Here is a 92-residue protein sequence, read N- to C-terminus: Conotoxin Ac8.1 (92 aa).

A signal peptide spans 1–19 (LKMGAMFVLLLLFTLASSQ). Residues 20-44 (QEGDVQARKTSLKSDFYRALRQYDR) constitute a propeptide that is removed on maturation. A Pyrrolidone carboxylic acid modification is found at glutamine 45.

The protein belongs to the conotoxin S superfamily. Post-translationally, contains 5 disulfide bonds. Expressed by the venom duct.

The protein localises to the secreted. This Conus achatinus (Little frog cone) protein is Conotoxin Ac8.1.